A 596-amino-acid polypeptide reads, in one-letter code: Aspartate--tRNA(Asp/Asn) ligase (596 aa).

L-aspartate is bound at residue Glu172. Residues Gln196–Lys199 form an aspartate region. Arg218 serves as a coordination point for L-aspartate. ATP-binding positions include Arg218–Glu220 and Gln227. Residue His450 participates in L-aspartate binding. Glu484 is an ATP binding site. Arg491 contributes to the L-aspartate binding site. Position 536 to 539 (Gly536 to Arg539) interacts with ATP.

It belongs to the class-II aminoacyl-tRNA synthetase family. Type 1 subfamily. In terms of assembly, homodimer.

It localises to the cytoplasm. The enzyme catalyses tRNA(Asx) + L-aspartate + ATP = L-aspartyl-tRNA(Asx) + AMP + diphosphate. Its function is as follows. Aspartyl-tRNA synthetase with relaxed tRNA specificity since it is able to aspartylate not only its cognate tRNA(Asp) but also tRNA(Asn). Reaction proceeds in two steps: L-aspartate is first activated by ATP to form Asp-AMP and then transferred to the acceptor end of tRNA(Asp/Asn). The chain is Aspartate--tRNA(Asp/Asn) ligase from Acidithiobacillus ferrooxidans (strain ATCC 23270 / DSM 14882 / CIP 104768 / NCIMB 8455) (Ferrobacillus ferrooxidans (strain ATCC 23270)).